Here is a 585-residue protein sequence, read N- to C-terminus: Regulatory protein BlaR1 (585 aa).

The Extracellular portion of the chain corresponds to M1–L4. A helical membrane pass occupies residues L5–F22. Over R23 to N31 the chain is Cytoplasmic. The chain crosses the membrane as a helical span at residues Y32–I48. The Extracellular segment spans residues P49 to N104. A helical transmembrane segment spans residues I105–L122. Residues K123–L311 are Cytoplasmic-facing. Residues I312–F328 form a helical membrane-spanning segment. At L329–Q585 the chain is on the extracellular side. The tract at residues G331–Q585 is beta-lactam antibiotic sensor domain. Residue S389 is the Acyl-ester intermediate of the active site. K392 is modified (N6-carboxylysine).

It belongs to the peptidase M56 family. In terms of processing, carboxylation occurs on two lysine residues. Carboxylation at 'Lys-392' activates the active site serine residue for acylation. On acylation, the lysine side chain experiences a spontaneous decarboxylation that entraps the sensor in its activated state.

It localises to the cell membrane. Integral membrane protein involved in sensing of the presence of beta-lactam antibiotics and transduction of the information to the cytoplasm. Mechanistically, activation of the signal transducer involves acylation of a serine in the C-terminal sensor domain upon binding of the beta-lactam antibiotic. In turn, a conformational change occurs and the signal is transmitted from the cell surface to the cytoplasm. There, the zinc protease domain is activated and initiates autoproteolysis as well as cleavage of the transcriptional repressor BlaI leading to derepression of antibiotic resistance genes. This is Regulatory protein BlaR1 (blaR1) from Staphylococcus aureus.